A 318-amino-acid chain; its full sequence is Pantothenate kinase (318 aa).

Residue 96-103 (GSVAVGKS) participates in ATP binding.

It belongs to the prokaryotic pantothenate kinase family.

Its subcellular location is the cytoplasm. The catalysed reaction is (R)-pantothenate + ATP = (R)-4'-phosphopantothenate + ADP + H(+). Its pathway is cofactor biosynthesis; coenzyme A biosynthesis; CoA from (R)-pantothenate: step 1/5. The polypeptide is Pantothenate kinase (Coxiella burnetii (strain Dugway 5J108-111)).